The sequence spans 306 residues: Protein STPG3 (306 aa).

The segment at 210–230 is disordered; that stretch reads CSYTPLLPTSKPSGEKRPSPN.

This is Protein STPG3 from Mus musculus (Mouse).